We begin with the raw amino-acid sequence, 331 residues long: Coiled-coil domain-containing protein 92 (331 aa).

2 coiled-coil regions span residues 18-44 (MAATNLENQLHSAQKNLLFLQREHAST) and 76-152 (DGTS…EQRA). Residues 171–184 (SSSGTSDASPSGSP) are compositionally biased toward low complexity. The segment at 171 to 212 (SSSGTSDASPSGSPVLASYKPAPPKDKLPETPRRRMKKSLSA) is disordered. Positions 193 to 203 (PPKDKLPETPR) are enriched in basic and acidic residues. S209 is modified (phosphoserine).

Interacts with CEP164. In terms of assembly, (Microbial infection) Interacts with ebolavirus protein NP; this interaction sequesters NP in the cytoplasm. Phosphorylated at Ser-209 by TTBK2.

The protein localises to the cytoplasm. It is found in the cytoskeleton. It localises to the microtubule organizing center. The protein resides in the centrosome. Its subcellular location is the centriole. Interferon-stimulated protein that plays a role in innate immunity. Strongly inhibits ebolavirus transcription and replication. Forms a complex with viral RNA-bound nucleocapsid NP and thereby prevents the transport of NP to the cell surface. This Homo sapiens (Human) protein is Coiled-coil domain-containing protein 92 (CCDC92).